The following is a 147-amino-acid chain: Transthyretin (147 aa).

Positions Met1–Ala20 are cleaved as a signal peptide. Cys30 is modified (sulfocysteine). L-thyroxine is bound at residue Lys35. Ser72 carries the post-translational modification Phosphoserine. Glu74 provides a ligand contact to L-thyroxine. An N-linked (GlcNAc...) asparagine glycan is attached at Asn118. An L-thyroxine-binding site is contributed by Ser137.

It belongs to the transthyretin family. Homotetramer. Dimer of dimers. In the homotetramer, subunits assemble around a central channel that can accommodate two ligand molecules. Interacts with RBP4. Post-translationally, sulfonation of the reactive cysteine Cys-30 enhances the stability of the native conformation of TTR, avoiding misassembly of the protein leading to amyloid formation.

The protein resides in the secreted. In terms of biological role, thyroid hormone-binding protein. Probably transports thyroxine from the bloodstream to the brain. The protein is Transthyretin (TTR) of Macaca fascicularis (Crab-eating macaque).